Here is a 292-residue protein sequence, read N- to C-terminus: 2-(5''-triphosphoribosyl)-3'-dephosphocoenzyme-A synthase (292 aa).

Belongs to the CitG/MdcB family.

It catalyses the reaction 3'-dephospho-CoA + ATP = 2'-(5''-triphospho-alpha-D-ribosyl)-3'-dephospho-CoA + adenine. Catalyzes the formation of 2-(5''-triphosphoribosyl)-3'-dephosphocoenzyme-A, the precursor of the prosthetic group of the holo-acyl carrier protein (gamma chain) of citrate lyase, from ATP and dephospho-CoA. This is 2-(5''-triphosphoribosyl)-3'-dephosphocoenzyme-A synthase from Escherichia coli (strain SMS-3-5 / SECEC).